The primary structure comprises 377 residues: Diels-Alderase fsa2 (377 aa).

The protein belongs to the Diels-Alderase family.

It catalyses the reaction (5S)-3-[(2E,6R,8E,10E,12E)-2,6-dimethyltetradeca-2,8,10,12-tetraenoyl]-5-(hydroxymethyl)pyrrolidine-2,4-dione = trichosetin. It participates in mycotoxin biosynthesis. Functionally, diels-Alderase; part of the gene cluster that mediates the biosynthesis of equisetin, a trans-fused decalin-containing tetramic acid with antimicrobial activity. The PKS module of eqxS together with the enoylreductase eqxC catalyze the formation of the polyketide unit which is then conjugated to L-serine by the condensation domain of the eqxS NRPS module. Activity of the Dieckmann cyclase domain (RED) results in release of the Dieckmann product intermediate. Diels-Alderase eqx3 is involved in endo-selective Diels-Alder cycloaddition to form the decalin ring, leading to the production of N-desmethylequisetin also called trichosetin. Subsequent N-methylation is carried out by eqxD to give equisetin. This Fusarium heterosporum protein is Diels-Alderase fsa2.